A 306-amino-acid polypeptide reads, in one-letter code: UDP-3-O-acyl-N-acetylglucosamine deacetylase (306 aa).

Zn(2+) is bound by residues histidine 79, histidine 238, and aspartate 242. The active-site Proton donor is histidine 265.

Belongs to the LpxC family. Zn(2+) serves as cofactor.

The catalysed reaction is a UDP-3-O-[(3R)-3-hydroxyacyl]-N-acetyl-alpha-D-glucosamine + H2O = a UDP-3-O-[(3R)-3-hydroxyacyl]-alpha-D-glucosamine + acetate. It functions in the pathway glycolipid biosynthesis; lipid IV(A) biosynthesis; lipid IV(A) from (3R)-3-hydroxytetradecanoyl-[acyl-carrier-protein] and UDP-N-acetyl-alpha-D-glucosamine: step 2/6. Catalyzes the hydrolysis of UDP-3-O-myristoyl-N-acetylglucosamine to form UDP-3-O-myristoylglucosamine and acetate, the committed step in lipid A biosynthesis. This Shewanella frigidimarina (strain NCIMB 400) protein is UDP-3-O-acyl-N-acetylglucosamine deacetylase.